The chain runs to 108 residues: ATP-dependent Clp protease adapter protein ClpS (108 aa).

Belongs to the ClpS family. As to quaternary structure, binds to the N-terminal domain of the chaperone ClpA.

Involved in the modulation of the specificity of the ClpAP-mediated ATP-dependent protein degradation. This Leptospira borgpetersenii serovar Hardjo-bovis (strain JB197) protein is ATP-dependent Clp protease adapter protein ClpS.